We begin with the raw amino-acid sequence, 862 residues long: AP-1 complex subunit gamma-2 (862 aa).

11 HEAT repeats span residues 1-28 (MNPF…EERA), 29-65 (VVRK…LGYP), 101-136 (EVLM…CSAE), 137-173 (MARD…KVPD), 308-345 (GLRV…VDSQ), 346-382 (AVQR…ENNV), 384-417 (PLAK…KFAP), 418-454 (EKIW…NAPD), 458-496 (YTVR…NNAG), 507-545 (TESD…RFPS), and 560-599 (SFVL…ATFS). The GAE domain occupies 744–859 (AAYPSIVAFE…LEEGQINNFP (116 aa)).

The protein belongs to the adaptor complexes large subunit family. In terms of assembly, adaptor protein complex 1 (AP-1) is a heterotetramer composed of two large adaptins (gamma-type subunit and beta-type subunit), a medium adaptin (mu-type subunit) and a small adaptin (sigma-type subunit).

It is found in the golgi apparatus. The protein resides in the cytoplasmic vesicle. It localises to the clathrin-coated vesicle membrane. Its function is as follows. Subunit of clathrin-associated adaptor protein complex 1 that plays a role in protein sorting at the trans-Golgi network and early endosomes (TGN/EE). The AP complexes mediate both the recruitment of clathrin to membranes and the recognition of sorting signals within the cytosolic tails of transmembrane cargo molecules. This is AP-1 complex subunit gamma-2 from Arabidopsis thaliana (Mouse-ear cress).